A 142-amino-acid polypeptide reads, in one-letter code: MLDINAIQQILPHRYPFLLVDRILEMEEGKRVVGIKNVTANEPFFPGHFPGYPVMPGVLVIEAMAQVGAVAILSMPAYAGRIALFAGIDKARFRRQVVPGDTLRIEVEVLKLRGTIGKSMARAYVGEELAAEAELMFAIGQK.

His-48 is a catalytic residue.

It belongs to the thioester dehydratase family. FabZ subfamily.

It is found in the cytoplasm. It catalyses the reaction a (3R)-hydroxyacyl-[ACP] = a (2E)-enoyl-[ACP] + H2O. Functionally, involved in unsaturated fatty acids biosynthesis. Catalyzes the dehydration of short chain beta-hydroxyacyl-ACPs and long chain saturated and unsaturated beta-hydroxyacyl-ACPs. The sequence is that of 3-hydroxyacyl-[acyl-carrier-protein] dehydratase FabZ from Desulforamulus reducens (strain ATCC BAA-1160 / DSM 100696 / MI-1) (Desulfotomaculum reducens).